Reading from the N-terminus, the 58-residue chain is Glutathione reductase (58 aa).

FAD contacts are provided by glutamate 5, threonine 12, cysteine 13, and lysine 21. A disulfide bridge links cysteine 13 with cysteine 18.

This sequence belongs to the class-I pyridine nucleotide-disulfide oxidoreductase family. Homodimer. FAD is required as a cofactor.

Its subcellular location is the cytoplasm. The enzyme catalyses 2 glutathione + NADP(+) = glutathione disulfide + NADPH + H(+). In terms of biological role, catalyzes the reduction of glutathione disulfide (GSSG) to reduced glutathione (GSH). Constitutes the major mechanism to maintain a high GSH:GSSG ratio in the cytosol. This is Glutathione reductase from Spirulina sp.